A 216-amino-acid polypeptide reads, in one-letter code: UPF0134 protein MPN_344 (216 aa).

Residues 47 to 62 show a composition bias toward basic and acidic residues; it reads FTIIEDQQDRPDKPEE. 2 disordered regions span residues 47 to 104 and 194 to 216; these read FTII…PKPD and GKMDKMESRMDKMETRLDKLESK. A compositionally biased stretch (pro residues) spans 68–78; that stretch reads IPKPPKPPKGP. Over residues 83–93 the composition is skewed to low complexity; it reads EPGQPGGPDDP.

It belongs to the UPF0134 family.

The sequence is that of UPF0134 protein MPN_344 from Mycoplasma pneumoniae (strain ATCC 29342 / M129 / Subtype 1) (Mycoplasmoides pneumoniae).